A 390-amino-acid polypeptide reads, in one-letter code: Nucleosome assembly protein 1-like 1 (390 aa).

Over residues 1-10 (MADIDNKEQS) the composition is skewed to basic and acidic residues. The segment at 1–32 (MADIDNKEQSELDQDLEDVEEVEEEETGEETK) is disordered. At alanine 2 the chain carries N-acetylalanine. Position 10 is a phosphoserine (serine 10). Over residues 11-28 (ELDQDLEDVEEVEEEETG) the composition is skewed to acidic residues. 2 positions are modified to phosphothreonine: threonine 62 and threonine 64. A Phosphoserine modification is found at serine 69. Lysine 116 is subject to N6-acetyllysine. An NAP1L motif motif is present at residues 125 to 150 (YEPTEEECEWKPDEEDEVSEELKEKA). The span at 131-143 (ECEWKPDEEDEVS) shows a compositional bias: acidic residues. Residues 131–163 (ECEWKPDEEDEVSEELKEKAKIEDEKKDEEKED) form a disordered region. Serine 143 is modified (phosphoserine). Basic and acidic residues predominate over residues 144–163 (EELKEKAKIEDEKKDEEKED). Residues 272-278 (IKKKQKH) carry the Nuclear localization signal motif. A compositionally biased stretch (acidic residues) spans 345–375 (AIEDDDDDYDEEGEEADEEGEEEGDEENDPD). Residues 345-390 (AIEDDDDDYDEEGEEADEEGEEEGDEENDPDYDPKKDQNPAECKQQ) form a disordered region. Residues glutamate 358 and glutamate 359 each carry the 5-glutamyl polyglycine modification. Basic and acidic residues predominate over residues 376–390 (YDPKKDQNPAECKQQ). Cysteine 387 is modified (cysteine methyl ester). Cysteine 387 is lipidated: S-farnesyl cysteine. A propeptide spans 388–390 (KQQ) (removed in mature form).

It belongs to the nucleosome assembly protein (NAP) family. Homodimer. The dimer binds strongly and sequentially to single and double H2A-H2B heterodimers. Interacts with ERCC6; this interaction increases ERCC6 processivity. Interacts with RAD54. Interacts with SETD1A. In terms of processing, polyglycylated by TTLL10 on glutamate residues, resulting in polyglycine chains on the gamma-carboxyl group. Both polyglutamylation and polyglycylation modifications can coexist on the same protein on adjacent residues, and lowering polyglycylation levels increases polyglutamylation, and reciprocally. Post-translationally, polyglutamylated by TTLL4 on glutamate residues, resulting in polyglutamate chains on the gamma-carboxyl group. Both polyglutamylation and polyglycylation modifications can coexist on the same protein on adjacent residues, and lowering polyglycylation levels increases polyglutamylation, and reciprocally.

It localises to the nucleus. The protein resides in the melanosome. Its subcellular location is the cytoplasm. Histone chaperone that plays a role in the nuclear import of H2A-H2B and nucleosome assembly. Also participates in several important DNA repair mechanisms: greatly enhances ERCC6-mediated chromatin remodeling which is essential for transcription-coupled nucleotide excision DNA repair. Also stimulates homologous recombination (HR) by RAD51 and RAD54 which is essential in mitotic DNA double strand break (DSB) repair. Plays a key role in the regulation of embryonic neurogenesis. Promotes the proliferation of neural progenitors and inhibits neuronal differentiation during cortical development. Regulates neurogenesis via the modulation of RASSF10; regulates RASSF10 expression by promoting SETD1A-mediated H3K4 methylation at the RASSF10 promoter. This chain is Nucleosome assembly protein 1-like 1 (Nap1l1), found in Rattus norvegicus (Rat).